Reading from the N-terminus, the 167-residue chain is MAMETCFRAWALHAPAGSKDRLLVGNLVLPSKRALAPLSVGRVATRRPRHVCQSKNAVDEVVVADEKNWDGLVMACETPVLVEFWAPWCGPCRMIAPVIDELAKDYAGKITCCKVNTDDSPNVASTYGIRSIPTVLIFKGGEKKESVIGAVPKSTLTTLIDKYIGSS.

The N-terminal 53 residues, 1 to 53 (MAMETCFRAWALHAPAGSKDRLLVGNLVLPSKRALAPLSVGRVATRRPRHVCQ), are a transit peptide targeting the chloroplast. One can recognise a Thioredoxin domain in the interval 54–165 (SKNAVDEVVV…LTTLIDKYIG (112 aa)). Residues C89 and C92 are joined by a disulfide bond.

The protein belongs to the thioredoxin family. Plant M-type subfamily. As to quaternary structure, forms a complex with heterodimeric ferredoxin-thioredoxin reductase (FTR) and ferredoxin.

It localises to the plastid. The protein resides in the chloroplast. In terms of biological role, participates in various redox reactions through the reversible oxidation of the active center dithiol to a disulfide. The M form is known to activate NADP-malate dehydrogenase. This Zea mays (Maize) protein is Thioredoxin M-type, chloroplastic (TRM1).